Reading from the N-terminus, the 362-residue chain is MEQLKVEVDPKQGGDLPSIYTLQFEELEMWLKEQGEPKFRATQIFEWLYEKRVKQFQEMTNLSKDLRAKLEKHFNLTTLKTVTKQQSSDGTIKFLFELHDGYSIETVVMRHNYGNSVCVTTQVGCRLGCTFCASTLGGLKRNLEAGEIVAQVVEAQRAMDEQGERVGSIVVMGIGEPFDNYQALMPFLKTVNHDKGLNIGARHITVSTSGVVPKIYQFADEGLQINFAISLHAPNTELRSKLMPVNRAWPLPKLMDAIRYYIDKTGRRVTFEYGLFGGENDQVEHAEELADLIKDIKCHVNLIPVNYVPERDYVRTPRDQIFAFERTLKERGVNVTIRREQGHDIDAACGQLRAKERKEETR.

The Proton acceptor role is filled by glutamate 105. The Radical SAM core domain occupies 111 to 344 (HNYGNSVCVT…VTIRREQGHD (234 aa)). A disulfide bond links cysteine 118 and cysteine 349. Positions 125, 129, and 132 each coordinate [4Fe-4S] cluster. Residues 175-176 (GE), serine 207, 230-232 (SLH), and asparagine 306 contribute to the S-adenosyl-L-methionine site. Cysteine 349 (S-methylcysteine intermediate) is an active-site residue.

The protein belongs to the radical SAM superfamily. RlmN family. It depends on [4Fe-4S] cluster as a cofactor.

It localises to the cytoplasm. The enzyme catalyses adenosine(2503) in 23S rRNA + 2 reduced [2Fe-2S]-[ferredoxin] + 2 S-adenosyl-L-methionine = 2-methyladenosine(2503) in 23S rRNA + 5'-deoxyadenosine + L-methionine + 2 oxidized [2Fe-2S]-[ferredoxin] + S-adenosyl-L-homocysteine. It catalyses the reaction adenosine(37) in tRNA + 2 reduced [2Fe-2S]-[ferredoxin] + 2 S-adenosyl-L-methionine = 2-methyladenosine(37) in tRNA + 5'-deoxyadenosine + L-methionine + 2 oxidized [2Fe-2S]-[ferredoxin] + S-adenosyl-L-homocysteine. Specifically methylates position 2 of adenine 2503 in 23S rRNA and position 2 of adenine 37 in tRNAs. The polypeptide is Probable dual-specificity RNA methyltransferase RlmN (Halalkalibacterium halodurans (strain ATCC BAA-125 / DSM 18197 / FERM 7344 / JCM 9153 / C-125) (Bacillus halodurans)).